A 376-amino-acid chain; its full sequence is Anhydro-N-acetylmuramic acid kinase (376 aa).

Position 16–23 (Gly-16–Asp-23) interacts with ATP.

This sequence belongs to the anhydro-N-acetylmuramic acid kinase family.

The catalysed reaction is 1,6-anhydro-N-acetyl-beta-muramate + ATP + H2O = N-acetyl-D-muramate 6-phosphate + ADP + H(+). It functions in the pathway amino-sugar metabolism; 1,6-anhydro-N-acetylmuramate degradation. It participates in cell wall biogenesis; peptidoglycan recycling. Functionally, catalyzes the specific phosphorylation of 1,6-anhydro-N-acetylmuramic acid (anhMurNAc) with the simultaneous cleavage of the 1,6-anhydro ring, generating MurNAc-6-P. Is required for the utilization of anhMurNAc either imported from the medium or derived from its own cell wall murein, and thus plays a role in cell wall recycling. The polypeptide is Anhydro-N-acetylmuramic acid kinase (Paraburkholderia xenovorans (strain LB400)).